The chain runs to 202 residues: MAGPSFDLEIAHPLPLAGVDEAGRGPLAGPVVAAAVILDRGRVPAGIDDSKKLGAEARADLCGKIREVAHVGVGIATVEEIDEINILWASMLAMERAVAALGVEPAMVLVDGNRCPRWTRPSQWVIGGDALCLSIAAASIVAKEERDRMMADYDVHHPGYGWAKNKGYGTPAHLDALARLGPSPLHRRSFAPVAQFSLFPAA.

An RNase H type-2 domain is found at 14–202; sequence LPLAGVDEAG…VAQFSLFPAA (189 aa). Positions 20, 21, and 111 each coordinate a divalent metal cation.

Belongs to the RNase HII family. Mn(2+) serves as cofactor. Mg(2+) is required as a cofactor.

Its subcellular location is the cytoplasm. The enzyme catalyses Endonucleolytic cleavage to 5'-phosphomonoester.. In terms of biological role, endonuclease that specifically degrades the RNA of RNA-DNA hybrids. This is Ribonuclease HII from Rhizorhabdus wittichii (strain DSM 6014 / CCUG 31198 / JCM 15750 / NBRC 105917 / EY 4224 / RW1) (Sphingomonas wittichii).